Consider the following 338-residue polypeptide: Large ribosomal subunit protein uL10 (338 aa).

A disordered region spans residues 297–338 (PSAQQTQTQQSTAEEKKEEKKEEEKKGPSEEEIGSGLASLFG). Residues 298 to 308 (SAQQTQTQQST) show a composition bias toward low complexity. The span at 309–325 (AEEKKEEKKEEEKKGPS) shows a compositional bias: basic and acidic residues.

It belongs to the universal ribosomal protein uL10 family. As to quaternary structure, part of the 50S ribosomal subunit. Forms part of the ribosomal stalk which helps the ribosome interact with GTP-bound translation factors. Forms a heptameric L10(L12)2(L12)2(L12)2 complex, where L10 forms an elongated spine to which the L12 dimers bind in a sequential fashion.

Forms part of the ribosomal stalk, playing a central role in the interaction of the ribosome with GTP-bound translation factors. In Saccharolobus islandicus (strain Y.N.15.51 / Yellowstone #2) (Sulfolobus islandicus), this protein is Large ribosomal subunit protein uL10.